The chain runs to 375 residues: Erythronate-4-phosphate dehydrogenase (375 aa).

Positions 45 and 66 each coordinate substrate. NAD(+)-binding positions include aspartate 146, threonine 175, 206-208 (ASR), and aspartate 232. Residue arginine 208 is part of the active site. Glutamate 237 is an active-site residue. Histidine 254 (proton donor) is an active-site residue. Residue glycine 257 participates in NAD(+) binding. Tyrosine 258 contributes to the substrate binding site.

This sequence belongs to the D-isomer specific 2-hydroxyacid dehydrogenase family. PdxB subfamily. Homodimer.

Its subcellular location is the cytoplasm. The catalysed reaction is 4-phospho-D-erythronate + NAD(+) = (R)-3-hydroxy-2-oxo-4-phosphooxybutanoate + NADH + H(+). It functions in the pathway cofactor biosynthesis; pyridoxine 5'-phosphate biosynthesis; pyridoxine 5'-phosphate from D-erythrose 4-phosphate: step 2/5. Its function is as follows. Catalyzes the oxidation of erythronate-4-phosphate to 3-hydroxy-2-oxo-4-phosphonooxybutanoate. In Proteus mirabilis (strain HI4320), this protein is Erythronate-4-phosphate dehydrogenase.